Here is a 333-residue protein sequence, read N- to C-terminus: Glycerol-3-phosphate dehydrogenase [NAD(P)+] (333 aa).

NADPH is bound by residues Ser-13, Trp-14, Arg-34, and Lys-108. Residues Lys-108, Gly-137, and Ser-139 each coordinate sn-glycerol 3-phosphate. Residue Ala-141 participates in NADPH binding. Sn-glycerol 3-phosphate contacts are provided by Lys-192, Asp-245, Ser-255, Arg-256, and Asn-257. The active-site Proton acceptor is Lys-192. Arg-256 is a binding site for NADPH. Glu-282 serves as a coordination point for NADPH.

This sequence belongs to the NAD-dependent glycerol-3-phosphate dehydrogenase family.

It is found in the cytoplasm. The enzyme catalyses sn-glycerol 3-phosphate + NAD(+) = dihydroxyacetone phosphate + NADH + H(+). The catalysed reaction is sn-glycerol 3-phosphate + NADP(+) = dihydroxyacetone phosphate + NADPH + H(+). It participates in membrane lipid metabolism; glycerophospholipid metabolism. Catalyzes the reduction of the glycolytic intermediate dihydroxyacetone phosphate (DHAP) to sn-glycerol 3-phosphate (G3P), the key precursor for phospholipid synthesis. The polypeptide is Glycerol-3-phosphate dehydrogenase [NAD(P)+] (Thioalkalivibrio sulfidiphilus (strain HL-EbGR7)).